Reading from the N-terminus, the 84-residue chain is Putative membrane protein insertion efficiency factor (84 aa).

This sequence belongs to the UPF0161 family.

The protein localises to the cell inner membrane. Could be involved in insertion of integral membrane proteins into the membrane. The chain is Putative membrane protein insertion efficiency factor from Shewanella baltica (strain OS195).